Here is a 264-residue protein sequence, read N- to C-terminus: S-adenosylmethionine decarboxylase proenzyme (264 aa).

Residue serine 112 is the Schiff-base intermediate with substrate; via pyruvic acid of the active site. At serine 112 the chain carries Pyruvic acid (Ser); by autocatalysis. Catalysis depends on histidine 117, which acts as the Proton acceptor; for processing activity. Catalysis depends on cysteine 140, which acts as the Proton donor; for catalytic activity.

The protein belongs to the prokaryotic AdoMetDC family. Type 2 subfamily. As to quaternary structure, heterooctamer of four alpha and four beta chains arranged as a tetramer of alpha/beta heterodimers. The cofactor is pyruvate. Post-translationally, is synthesized initially as an inactive proenzyme. Formation of the active enzyme involves a self-maturation process in which the active site pyruvoyl group is generated from an internal serine residue via an autocatalytic post-translational modification. Two non-identical subunits are generated from the proenzyme in this reaction, and the pyruvate is formed at the N-terminus of the alpha chain, which is derived from the carboxyl end of the proenzyme. The post-translation cleavage follows an unusual pathway, termed non-hydrolytic serinolysis, in which the side chain hydroxyl group of the serine supplies its oxygen atom to form the C-terminus of the beta chain, while the remainder of the serine residue undergoes an oxidative deamination to produce ammonia and the pyruvoyl group blocking the N-terminus of the alpha chain.

The catalysed reaction is S-adenosyl-L-methionine + H(+) = S-adenosyl 3-(methylsulfanyl)propylamine + CO2. The protein operates within amine and polyamine biosynthesis; S-adenosylmethioninamine biosynthesis; S-adenosylmethioninamine from S-adenosyl-L-methionine: step 1/1. Catalyzes the decarboxylation of S-adenosylmethionine to S-adenosylmethioninamine (dcAdoMet), the propylamine donor required for the synthesis of the polyamines spermine and spermidine from the diamine putrescine. In Salmonella gallinarum (strain 287/91 / NCTC 13346), this protein is S-adenosylmethionine decarboxylase proenzyme.